A 101-amino-acid chain; its full sequence is MAKKSKIARNEQRKVIVERYAAKRLELKKALVDPNGTDESREAARAGIQRLPRDASPIRVRNRDGIDGRPRGNLSKFGISRVRFRDMAHRGELPGITKSSW.

The tract at residues 36–72 is disordered; that stretch reads GTDESREAARAGIQRLPRDASPIRVRNRDGIDGRPRG. Basic and acidic residues predominate over residues 61-70; that stretch reads RNRDGIDGRP.

Belongs to the universal ribosomal protein uS14 family. As to quaternary structure, part of the 30S ribosomal subunit. Contacts proteins S3 and S10.

Functionally, binds 16S rRNA, required for the assembly of 30S particles and may also be responsible for determining the conformation of the 16S rRNA at the A site. This Clavibacter michiganensis subsp. michiganensis (strain NCPPB 382) protein is Small ribosomal subunit protein uS14.